Reading from the N-terminus, the 395-residue chain is Protein maternal effect lethal 26 (395 aa).

One can recognise an MATH domain in the interval 41–162 (KVQHTWTVKN…RDMIIVNVEI (122 aa)). The region spanning 201 to 269 (CDFAINVNGK…IYCGRCNKDI (69 aa)) is the BTB domain.

Interacts (via BTB domain) with cul-3. Seems to be a component of a E3 ubiquitin-protein ligase complex containing cul-3. Interacts (probably via MATH domain) with mei-1, which targets mei-1 for ubiquitin-mediated proteolysis. Interacts (probably via MATH domain) with ppfr-1, the regulatory subunit of the PP4 complex; targets ppfr-1 for ubiquitin-mediated proteolysis. May interact (via MATH domain) with unc-89 (via Ig-like C2-type domain 2/3 and, Ig-like C2-type domain 50 and fibronectin type-III domain 2). Expressed in body wall muscles.

The protein resides in the cytoplasm. Its subcellular location is the myofibril. The protein localises to the sarcomere. It localises to the m line. It is found in the i band. It functions in the pathway protein modification; protein ubiquitination. Functionally, probable substrate-specific adapter of an E3 ubiquitin-protein ligase complex which mediates the ubiquitination and subsequent proteasomal degradation of target proteins. Controls degradation of microtubule severing protein mei-1 after meiosis. Controls degradation of ppfr-1, the regulatory subunit of PP4 complex, after meiosis. In body wall muscles, involved in the organization of myosin thick filaments, likely by regulating the degradation of mei-1 downstream of unc-89. May also activate the TORC1 pathway. The polypeptide is Protein maternal effect lethal 26 (mel-26) (Caenorhabditis elegans).